Reading from the N-terminus, the 277-residue chain is Release factor glutamine methyltransferase (277 aa).

S-adenosyl-L-methionine-binding positions include 119-123 (GTGCG), Asp142, Trp170, and Asn184. Residue 184 to 187 (NPPY) coordinates substrate.

The protein belongs to the protein N5-glutamine methyltransferase family. PrmC subfamily.

It catalyses the reaction L-glutaminyl-[peptide chain release factor] + S-adenosyl-L-methionine = N(5)-methyl-L-glutaminyl-[peptide chain release factor] + S-adenosyl-L-homocysteine + H(+). In terms of biological role, methylates the class 1 translation termination release factors RF1/PrfA and RF2/PrfB on the glutamine residue of the universally conserved GGQ motif. In Buchnera aphidicola subsp. Baizongia pistaciae (strain Bp), this protein is Release factor glutamine methyltransferase.